A 121-amino-acid chain; its full sequence is Small ribosomal subunit protein uS13 (121 aa).

The tract at residues 88 to 121 is disordered; the sequence is GMRHRRGLPTRGQNTKNNARTRKGPAKSIAGKKK. Over residues 106–121 the composition is skewed to basic residues; it reads ARTRKGPAKSIAGKKK.

It belongs to the universal ribosomal protein uS13 family. As to quaternary structure, part of the 30S ribosomal subunit. Forms a loose heterodimer with protein S19. Forms two bridges to the 50S subunit in the 70S ribosome.

Its function is as follows. Located at the top of the head of the 30S subunit, it contacts several helices of the 16S rRNA. In the 70S ribosome it contacts the 23S rRNA (bridge B1a) and protein L5 of the 50S subunit (bridge B1b), connecting the 2 subunits; these bridges are implicated in subunit movement. Contacts the tRNAs in the A and P-sites. The sequence is that of Small ribosomal subunit protein uS13 from Lactococcus lactis subsp. cremoris (strain MG1363).